A 101-amino-acid chain; its full sequence is Large ribosomal subunit protein bL21 (101 aa).

This sequence belongs to the bacterial ribosomal protein bL21 family. As to quaternary structure, part of the 50S ribosomal subunit. Contacts protein L20.

This protein binds to 23S rRNA in the presence of protein L20. The polypeptide is Large ribosomal subunit protein bL21 (Magnetococcus marinus (strain ATCC BAA-1437 / JCM 17883 / MC-1)).